Consider the following 358-residue polypeptide: Diels-Alderase phmD (358 aa).

The protein belongs to the Diels-Alderase family.

It functions in the pathway mycotoxin biosynthesis. Functionally, diels-Alderase; part of the gene cluster that mediates the biosynthesis of the mycotoxins phomacins, leucine-derived cytochalasans with potent actin polymerization-inhibitory activities and monocot-specific antigerminative activities. The first step in the pathway is catalyzed by the hybrid PKS-NRPS phmA, assisted by the enoyl reductase phmE, that are responsible for fusion of the leucine precursor and the polyketide backbone to produce a 2-pyrrolidone intermediate. The polyketide synthase module (PKS) of phmA is responsible for the synthesis of the polyketide backbone and the downstream nonribosomal peptide synthetase (NRPS) amidates the carboxyl end of the polyketide with the leucine precursor. Because phmA lacks a designated enoylreductase (ER) domain, the required activity is provided the enoyl reductase phmE. Reduction by the hydrolyase phmG, followed by dehydration and intra-molecular Diels-Alder cyclization by the Diels-Alderase phmD then yield the required isoindolone-fused macrocycle. A number of oxidative steps catalyzed by the tailoring cytochrome P450 monooxygenase phmB, the FAD-linked oxidoreductase phmC and the short-chain dehydrogenase/reductase phmF, are further required to afford the final products, phomacin D and phomacin E. The sequence is that of Diels-Alderase phmD from Phaeosphaeria nodorum (strain SN15 / ATCC MYA-4574 / FGSC 10173) (Glume blotch fungus).